A 461-amino-acid chain; its full sequence is ADP-specific phosphofructokinase (461 aa).

One can recognise an ADPK domain in the interval 1 to 457; sequence MVRELLEKAR…FASYLAMLKE (457 aa). Glu-268, Glu-298, and Asp-441 together coordinate Mg(2+). Asp-441 functions as the Proton acceptor in the catalytic mechanism.

It belongs to the carbohydrate kinase PfkC family. Mg(2+) is required as a cofactor.

It localises to the cytoplasm. It carries out the reaction beta-D-fructose 6-phosphate + ADP = beta-D-fructose 1,6-bisphosphate + AMP + H(+). It functions in the pathway carbohydrate degradation; glycolysis. Catalyzes the phosphorylation of fructose 6-phosphate to fructose 1,6-bisphosphate using ADP as the phosphate donor. This is ADP-specific phosphofructokinase from Thermococcus zilligii.